A 407-amino-acid chain; its full sequence is Carbamoyl phosphate synthase small chain (407 aa).

Residues 1–205 (MTETTPKTAP…LQDGYGEQDA (205 aa)) are CPSase. Ser60, Gly257, and Gly259 together coordinate L-glutamine. The 189-residue stretch at 209 to 397 (HVVALDFGVK…INLIRERKGQ (189 aa)) folds into the Glutamine amidotransferase type-1 domain. Residue Cys286 is the Nucleophile of the active site. L-glutamine-binding residues include Leu287, Gln290, Asn328, Gly330, and Phe331. Residues His370 and Glu372 contribute to the active site.

It belongs to the CarA family. As to quaternary structure, composed of two chains; the small (or glutamine) chain promotes the hydrolysis of glutamine to ammonia, which is used by the large (or ammonia) chain to synthesize carbamoyl phosphate. Tetramer of heterodimers (alpha,beta)4.

The enzyme catalyses hydrogencarbonate + L-glutamine + 2 ATP + H2O = carbamoyl phosphate + L-glutamate + 2 ADP + phosphate + 2 H(+). It carries out the reaction L-glutamine + H2O = L-glutamate + NH4(+). It functions in the pathway amino-acid biosynthesis; L-arginine biosynthesis; carbamoyl phosphate from bicarbonate: step 1/1. The protein operates within pyrimidine metabolism; UMP biosynthesis via de novo pathway; (S)-dihydroorotate from bicarbonate: step 1/3. In terms of biological role, small subunit of the glutamine-dependent carbamoyl phosphate synthetase (CPSase). CPSase catalyzes the formation of carbamoyl phosphate from the ammonia moiety of glutamine, carbonate, and phosphate donated by ATP, constituting the first step of 2 biosynthetic pathways, one leading to arginine and/or urea and the other to pyrimidine nucleotides. The small subunit (glutamine amidotransferase) binds and cleaves glutamine to supply the large subunit with the substrate ammonia. This Brucella abortus (strain S19) protein is Carbamoyl phosphate synthase small chain.